A 903-amino-acid chain; its full sequence is Protein translocase subunit SecA (903 aa).

ATP contacts are provided by residues glutamine 89, 107–111 (GEGKT), and aspartate 502. Zn(2+) is bound by residues cysteine 886, cysteine 888, cysteine 897, and histidine 898.

This sequence belongs to the SecA family. As to quaternary structure, monomer and homodimer. Part of the essential Sec protein translocation apparatus which comprises SecA, SecYEG and auxiliary proteins SecDF-YajC and YidC. The cofactor is Zn(2+).

Its subcellular location is the cell inner membrane. The protein resides in the cytoplasm. The enzyme catalyses ATP + H2O + cellular proteinSide 1 = ADP + phosphate + cellular proteinSide 2.. Part of the Sec protein translocase complex. Interacts with the SecYEG preprotein conducting channel. Has a central role in coupling the hydrolysis of ATP to the transfer of proteins into and across the cell membrane, serving both as a receptor for the preprotein-SecB complex and as an ATP-driven molecular motor driving the stepwise translocation of polypeptide chains across the membrane. The polypeptide is Protein translocase subunit SecA (Rhizobium meliloti (strain 1021) (Ensifer meliloti)).